The following is a 682-amino-acid chain: MTGQAALERSVSSHRLSVRSRLEGEAERAESAISRTDGDDDTCSELQRVTALELPSAEMLEAFTQRRPLARLVNLVLSLREWAHKSLVETEQRPDSFLERFRGPQAANDQSAAPADAPKKTFKERWEGFVVSQSDDIYYYWLFFIALASLYNWIMLVARACFDQLQDENFFLWVGLDYLCDVIYILDTCIRLRTGYLEQGLLVKDLAKLRDNYIRTLQFKLDFLSILPTELLFFVTGYVPQLRFNRLLRFSRMFEFFDRTETRTNYPNAFRICNLILYILVIIHWNACIYYAISKALGLSSDTWVYSGQNKTLSFCYVYCFYWSTLTLTTIGEMPPPVKDEEYVFVVFDFLVGVLIFATIVGNVGSMIANMNATRAEFQTRIDAIKHYMHFRKVNRTLETRVIKWFDYLWTNKKTVDEQEVLKNLPDKLRAEIAINVHLDTLKKVRIFQDCEAGLLVELVLKLRPQVYSPGDYICRKGDIGKEMYIIKEGQLAVVADDGVTQFALLTAGGCFGEISILNIQGSKMGNRRTANIRSIGYSDLFCLSKDDLMEAVAEYPDAQKVLEERGREILRKQGLLDESVAAGGLGVIDTEEKVERLDASLDILQTRFARLLGEFTSTQRRLKQRITALERQLCHTGLGLLSDNEAEGEHAGVPTHTHADIHAQPETHTRTSAETNSEEET.

Residues 1–41 (MTGQAALERSVSSHRLSVRSRLEGEAERAESAISRTDGDDD) are disordered. Residues 1 to 136 (MTGQAALERS…EGFVVSQSDD (136 aa)) are Cytoplasmic-facing. Basic and acidic residues predominate over residues 20–30 (SRLEGEAERAE). A helical membrane pass occupies residues 137–157 (IYYYWLFFIALASLYNWIMLV). The Extracellular segment spans residues 158-169 (ARACFDQLQDEN). Residues 170–190 (FFLWVGLDYLCDVIYILDTCI) traverse the membrane as a helical segment. At 191–218 (RLRTGYLEQGLLVKDLAKLRDNYIRTLQ) the chain is on the cytoplasmic side. A helical transmembrane segment spans residues 219–239 (FKLDFLSILPTELLFFVTGYV). The Extracellular segment spans residues 240-272 (PQLRFNRLLRFSRMFEFFDRTETRTNYPNAFRI). A helical transmembrane segment spans residues 273-293 (CNLILYILVIIHWNACIYYAI). The Cytoplasmic portion of the chain corresponds to 294–311 (SKALGLSSDTWVYSGQNK). Residues 312–332 (TLSFCYVYCFYWSTLTLTTIG) traverse the membrane as a helical segment. The Extracellular segment spans residues 333–343 (EMPPPVKDEEY). A helical membrane pass occupies residues 344–364 (VFVVFDFLVGVLIFATIVGNV). Topologically, residues 365-682 (GSMIANMNAT…SAETNSEEET (318 aa)) are cytoplasmic. Residues 455–577 (LLVE…QGLL), Glu-514, and Arg-529 contribute to the 3',5'-cyclic AMP site. Residues 649-682 (GEHAGVPTHTHADIHAQPETHTRTSAETNSEEET) form a disordered region. A compositionally biased stretch (basic and acidic residues) spans 658–672 (THADIHAQPETHTRT).

It belongs to the cyclic nucleotide-gated cation channel (TC 1.A.1.5) family. Olfactory neurons.

It is found in the membrane. In terms of biological role, this cyclic nucleotide-gated channel is activated equally well by both cAMP and cGMP. This chain is Cyclic nucleotide-gated cation channel, found in Ictalurus punctatus (Channel catfish).